Reading from the N-terminus, the 345-residue chain is tRNA-specific 2-thiouridylase MnmA (345 aa).

Residues leucine 6–serine 13 and leucine 32 contribute to the ATP site. Cysteine 92 functions as the Nucleophile in the catalytic mechanism. A disulfide bridge connects residues cysteine 92 and cysteine 191. Position 116 (glycine 116) interacts with ATP. The tract at residues lysine 138–glutamine 140 is interaction with tRNA. Cysteine 191 (cysteine persulfide intermediate) is an active-site residue. The interval arginine 293–tyrosine 294 is interaction with tRNA.

Belongs to the MnmA/TRMU family.

The protein resides in the cytoplasm. The catalysed reaction is S-sulfanyl-L-cysteinyl-[protein] + uridine(34) in tRNA + AH2 + ATP = 2-thiouridine(34) in tRNA + L-cysteinyl-[protein] + A + AMP + diphosphate + H(+). Catalyzes the 2-thiolation of uridine at the wobble position (U34) of tRNA, leading to the formation of s(2)U34. This chain is tRNA-specific 2-thiouridylase MnmA, found in Helicobacter hepaticus (strain ATCC 51449 / 3B1).